The sequence spans 403 residues: Queuine tRNA-ribosyltransferase catalytic subunit 1 (403 aa).

Ala-2 bears the N-acetylalanine mark. The Proton acceptor role is filled by Asp-105. 105-109 (DSGGF) lines the queuine pocket. Ser-139 is modified (phosphoserine). The queuine site is built by Asp-159, Gln-202, and Gly-229. An RNA binding region spans residues 260-266 (GVGYATD). Catalysis depends on Asp-279, which acts as the Nucleophile. The interval 284–288 (TRTAR) is RNA binding; important for wobble base 34 recognition. Positions 317, 319, 322, and 348 each coordinate Zn(2+).

This sequence belongs to the queuine tRNA-ribosyltransferase family. In terms of assembly, heterodimer of a catalytic subunit QTRT1 and an accessory subunit QTRT2. Zn(2+) is required as a cofactor.

The protein localises to the cytoplasm. The protein resides in the mitochondrion outer membrane. It catalyses the reaction guanosine(34) in tRNA + queuine = queuosine(34) in tRNA + guanine. Its function is as follows. Catalytic subunit of the queuine tRNA-ribosyltransferase (TGT) that catalyzes the base-exchange of a guanine (G) residue with queuine (Q) at position 34 (anticodon wobble position) in tRNAs with GU(N) anticodons (tRNA-Asp, -Asn, -His and -Tyr), resulting in the hypermodified nucleoside queuosine (7-(((4,5-cis-dihydroxy-2-cyclopenten-1-yl)amino)methyl)-7-deazaguanosine). Catalysis occurs through a double-displacement mechanism. The nucleophile active site attacks the C1' of nucleotide 34 to detach the guanine base from the RNA, forming a covalent enzyme-RNA intermediate. The proton acceptor active site deprotonates the incoming queuine, allowing a nucleophilic attack on the C1' of the ribose to form the product. The protein is Queuine tRNA-ribosyltransferase catalytic subunit 1 of Rattus norvegicus (Rat).